Here is a 531-residue protein sequence, read N- to C-terminus: Arginine--tRNA ligase (531 aa).

A 'HIGH' region motif is present at residues 113-123; the sequence is ANPTGPLHIGH.

This sequence belongs to the class-I aminoacyl-tRNA synthetase family. In terms of assembly, monomer.

The protein resides in the cytoplasm. It carries out the reaction tRNA(Arg) + L-arginine + ATP = L-arginyl-tRNA(Arg) + AMP + diphosphate. The polypeptide is Arginine--tRNA ligase (Campylobacter fetus subsp. fetus (strain 82-40)).